The chain runs to 231 residues: Insertion sequence IS1162 putative ATP-binding protein (231 aa).

Gly-107–Thr-114 provides a ligand contact to ATP.

The protein belongs to the IS21/IS1162 putative ATP-binding protein family.

This is Insertion sequence IS1162 putative ATP-binding protein from Pseudomonas fluorescens.